Here is a 313-residue protein sequence, read N- to C-terminus: Ribosomal RNA small subunit methyltransferase H (313 aa).

S-adenosyl-L-methionine is bound by residues G35–H37, D55, F80, D102, and Q109.

This sequence belongs to the methyltransferase superfamily. RsmH family.

It localises to the cytoplasm. The catalysed reaction is cytidine(1402) in 16S rRNA + S-adenosyl-L-methionine = N(4)-methylcytidine(1402) in 16S rRNA + S-adenosyl-L-homocysteine + H(+). Functionally, specifically methylates the N4 position of cytidine in position 1402 (C1402) of 16S rRNA. In Shewanella oneidensis (strain ATCC 700550 / JCM 31522 / CIP 106686 / LMG 19005 / NCIMB 14063 / MR-1), this protein is Ribosomal RNA small subunit methyltransferase H.